A 158-amino-acid polypeptide reads, in one-letter code: 6,7-dimethyl-8-ribityllumazine synthase (158 aa).

5-amino-6-(D-ribitylamino)uracil contacts are provided by residues Phe-22, 57–59 (AYE), and 84–86 (TVI). 89–90 (GT) contributes to the (2S)-2-hydroxy-3-oxobutyl phosphate binding site. Residue His-92 is the Proton donor of the active site. Phe-117 contacts 5-amino-6-(D-ribitylamino)uracil. A (2S)-2-hydroxy-3-oxobutyl phosphate-binding site is contributed by Arg-131.

It belongs to the DMRL synthase family. As to quaternary structure, forms an icosahedral capsid composed of 60 subunits, arranged as a dodecamer of pentamers.

It catalyses the reaction (2S)-2-hydroxy-3-oxobutyl phosphate + 5-amino-6-(D-ribitylamino)uracil = 6,7-dimethyl-8-(1-D-ribityl)lumazine + phosphate + 2 H2O + H(+). Its pathway is cofactor biosynthesis; riboflavin biosynthesis; riboflavin from 2-hydroxy-3-oxobutyl phosphate and 5-amino-6-(D-ribitylamino)uracil: step 1/2. Functionally, catalyzes the formation of 6,7-dimethyl-8-ribityllumazine by condensation of 5-amino-6-(D-ribitylamino)uracil with 3,4-dihydroxy-2-butanone 4-phosphate. This is the penultimate step in the biosynthesis of riboflavin. The chain is 6,7-dimethyl-8-ribityllumazine synthase from Pectobacterium atrosepticum (strain SCRI 1043 / ATCC BAA-672) (Erwinia carotovora subsp. atroseptica).